The following is a 182-amino-acid chain: Crossover junction endodeoxyribonuclease RuvC (182 aa).

Active-site residues include aspartate 7, glutamate 67, and aspartate 139. Mg(2+) is bound by residues aspartate 7, glutamate 67, and aspartate 139.

This sequence belongs to the RuvC family. In terms of assembly, homodimer which binds Holliday junction (HJ) DNA. The HJ becomes 2-fold symmetrical on binding to RuvC with unstacked arms; it has a different conformation from HJ DNA in complex with RuvA. In the full resolvosome a probable DNA-RuvA(4)-RuvB(12)-RuvC(2) complex forms which resolves the HJ. Mg(2+) is required as a cofactor.

It localises to the cytoplasm. It carries out the reaction Endonucleolytic cleavage at a junction such as a reciprocal single-stranded crossover between two homologous DNA duplexes (Holliday junction).. The RuvA-RuvB-RuvC complex processes Holliday junction (HJ) DNA during genetic recombination and DNA repair. Endonuclease that resolves HJ intermediates. Cleaves cruciform DNA by making single-stranded nicks across the HJ at symmetrical positions within the homologous arms, yielding a 5'-phosphate and a 3'-hydroxyl group; requires a central core of homology in the junction. The consensus cleavage sequence is 5'-(A/T)TT(C/G)-3'. Cleavage occurs on the 3'-side of the TT dinucleotide at the point of strand exchange. HJ branch migration catalyzed by RuvA-RuvB allows RuvC to scan DNA until it finds its consensus sequence, where it cleaves and resolves the cruciform DNA. In Bordetella parapertussis (strain 12822 / ATCC BAA-587 / NCTC 13253), this protein is Crossover junction endodeoxyribonuclease RuvC.